Consider the following 441-residue polypeptide: Ribulose bisphosphate carboxylase/oxygenase activase, chloroplastic (441 aa).

Residue 167 to 174 (VWGGKGQG) participates in ATP binding.

The protein belongs to the RuBisCO activase family.

The protein localises to the plastid. It is found in the chloroplast stroma. Functionally, activation of RuBisCO (ribulose-1,5-bisphosphate carboxylase/oxygenase; EC 4.1.1.39) involves the ATP-dependent carboxylation of the epsilon-amino group of lysine leading to a carbamate structure. This is Ribulose bisphosphate carboxylase/oxygenase activase, chloroplastic (RCA1) from Phaseolus vulgaris (Kidney bean).